The primary structure comprises 89 residues: Large ribosomal subunit protein uL29c (89 aa).

It belongs to the universal ribosomal protein uL29 family.

The protein resides in the plastid. The protein localises to the chloroplast. The polypeptide is Large ribosomal subunit protein uL29c (rpl29) (Trieres chinensis (Marine centric diatom)).